An 815-amino-acid chain; its full sequence is Glycogen phosphorylase (815 aa).

Lys-662 carries the N6-(pyridoxal phosphate)lysine modification.

This sequence belongs to the glycogen phosphorylase family. Pyridoxal 5'-phosphate is required as a cofactor.

The catalysed reaction is [(1-&gt;4)-alpha-D-glucosyl](n) + phosphate = [(1-&gt;4)-alpha-D-glucosyl](n-1) + alpha-D-glucose 1-phosphate. Phosphorylase is an important allosteric enzyme in carbohydrate metabolism. Enzymes from different sources differ in their regulatory mechanisms and in their natural substrates. However, all known phosphorylases share catalytic and structural properties. This chain is Glycogen phosphorylase (glgP), found in Shigella flexneri.